A 139-amino-acid polypeptide reads, in one-letter code: MVTHAAGARTFCEEQKKGSTYSVPKSKEKLMEKHSQEARQADRESEKPVDSLHPGAGTAKHPPPAASLEEKPDVKQKSSRKKVVVPQIIITRASNETLVSCSSSGSDQQRTIREPEDWGPYRRHRNPSTADAYNSHLKE.

The tract at residues 1–67 (MVTHAAGART…TAKHPPPAAS (67 aa)) is interaction with ATG16L1. The interval 1 to 83 (MVTHAAGART…VKQKSSRKKV (83 aa)) is disordered. Residues 25–50 (KSKEKLMEKHSQEARQADRESEKPVD) show a composition bias toward basic and acidic residues. The segment at 68–139 (LEEKPDVKQK…ADAYNSHLKE (72 aa)) is interaction with VDAC2. The short motif at 86-91 (PQIIIT) is the PQIIIT element. A Phosphoserine modification is found at Ser94. The segment covering 97-109 (TLVSCSSSGSDQQ) has biased composition (polar residues). Positions 97-139 (TLVSCSSSGSDQQRTIREPEDWGPYRRHRNPSTADAYNSHLKE) are disordered. Residues 110–120 (RTIREPEDWGP) are compositionally biased toward basic and acidic residues.

As to quaternary structure, interacts (via PQIIIT motif) with PPP3R1, PPP3R2, PPP3CA, PPP3CB and PPP3CC. Interacts with VDAC2. Interacts with ATG16L1 (via WD repeats).

Its subcellular location is the cytoplasm. The protein localises to the cytosol. It is found in the nucleus. It localises to the mitochondrion. In terms of biological role, plays an important role in sperm motility and male fertility. Required for sperm midpiece flexibility and for the localization of sperm calcineurin to the mitochondria. Promotes mitophagy as well as acts as an autophagy mediator in male germline cells. Links damaged mitochondria to autophagosomes via its binding to the outer mitochondrial membrane protein VDAC2, as well as to key autophagy machinery component ATG16L1. In Homo sapiens (Human), this protein is Spermatogenesis-associated protein 33 (SPATA33).